Here is a 414-residue protein sequence, read N- to C-terminus: Zinc metalloproteinase nas-26 (414 aa).

Positions 1-20 (MTSSLVLILAPLALVAIGEA) are cleaved as a signal peptide. A propeptide spanning residues 21 to 61 (AFGNSSKIFEIPGLEVMASDKYPHFTTIETVSRTKVHRHRR) is cleaved from the precursor. Residue asparagine 24 is glycosylated (N-linked (GlcNAc...) asparagine). The Peptidase M12A domain occupies 62–264 (EVIAGQIYDW…AKVINDIYCP (203 aa)). Cystine bridges form between cysteine 103/cysteine 263, cysteine 126/cysteine 146, cysteine 267/cysteine 286, cysteine 289/cysteine 300, cysteine 308/cysteine 331, and cysteine 358/cysteine 378. Histidine 154 contacts Zn(2+). Glutamate 155 is a catalytic residue. 2 residues coordinate Zn(2+): histidine 158 and histidine 164. Residues 251 to 307 (AFLDAKVINDIYCPNACQGRNHLNCLAGGYPDPNNCNVCRCPEGLGGPDCGRLQPSP) form the EGF-like domain. Positions 308-414 (CGGEIHASDQ…RFSLRFRRQA (107 aa)) constitute a CUB domain.

Zn(2+) is required as a cofactor.

It is found in the secreted. Metalloprotease. This Caenorhabditis elegans protein is Zinc metalloproteinase nas-26 (toh-1).